The chain runs to 145 residues: Probable low molecular weight protein-tyrosine-phosphatase EpsP (145 aa).

The Nucleophile role is filled by cysteine 9. The active site involves arginine 15. Aspartate 114 (proton donor) is an active-site residue.

It belongs to the low molecular weight phosphotyrosine protein phosphatase family.

It carries out the reaction O-phospho-L-tyrosyl-[protein] + H2O = L-tyrosyl-[protein] + phosphate. Its pathway is glycan metabolism; exopolysaccharide biosynthesis. May be involved in assembly or function of the EPS I polymerization/export complex and/or the EpsB ATPase. Alternatively it may function in the removal of the terminal phosphate from C55-isoprenyl pyrophosphate in order to recycle the C55-isoprenyl phosphate lipid carrier used in the synthesis of polysaccharide repeat units. The protein is Probable low molecular weight protein-tyrosine-phosphatase EpsP (epsP) of Ralstonia solanacearum (Pseudomonas solanacearum).